A 313-amino-acid polypeptide reads, in one-letter code: 4-diphosphocytidyl-2-C-methyl-D-erythritol kinase (313 aa).

Residue Lys10 is part of the active site. 95-105 (PVTAGLGGGSS) provides a ligand contact to ATP. Asp136 is an active-site residue. The disordered stretch occupies residues 289-313 (HPRVSPWRSPRSASSRSTRRSSRPT). A compositionally biased stretch (low complexity) spans 292–304 (VSPWRSPRSASSR).

The protein belongs to the GHMP kinase family. IspE subfamily.

It carries out the reaction 4-CDP-2-C-methyl-D-erythritol + ATP = 4-CDP-2-C-methyl-D-erythritol 2-phosphate + ADP + H(+). Its pathway is isoprenoid biosynthesis; isopentenyl diphosphate biosynthesis via DXP pathway; isopentenyl diphosphate from 1-deoxy-D-xylulose 5-phosphate: step 3/6. Its function is as follows. Catalyzes the phosphorylation of the position 2 hydroxy group of 4-diphosphocytidyl-2C-methyl-D-erythritol. The protein is 4-diphosphocytidyl-2-C-methyl-D-erythritol kinase of Anaeromyxobacter dehalogenans (strain 2CP-1 / ATCC BAA-258).